Here is a 412-residue protein sequence, read N- to C-terminus: uncharacterized protein (412 aa).

This sequence belongs to the PQQ oxidoreductase GdhB family. It depends on pyrroloquinoline quinone as a cofactor.

This is an uncharacterized protein from Synechocystis sp. (strain ATCC 27184 / PCC 6803 / Kazusa).